Consider the following 194-residue polypeptide: dTTP/UTP pyrophosphatase (194 aa).

Aspartate 77 (proton acceptor) is an active-site residue.

This sequence belongs to the Maf family. YhdE subfamily. The cofactor is a divalent metal cation.

The protein localises to the cytoplasm. The catalysed reaction is dTTP + H2O = dTMP + diphosphate + H(+). The enzyme catalyses UTP + H2O = UMP + diphosphate + H(+). Functionally, nucleoside triphosphate pyrophosphatase that hydrolyzes dTTP and UTP. May have a dual role in cell division arrest and in preventing the incorporation of modified nucleotides into cellular nucleic acids. The polypeptide is dTTP/UTP pyrophosphatase (Flavobacterium johnsoniae (strain ATCC 17061 / DSM 2064 / JCM 8514 / BCRC 14874 / CCUG 350202 / NBRC 14942 / NCIMB 11054 / UW101) (Cytophaga johnsonae)).